The sequence spans 308 residues: Oxygen-dependent coproporphyrinogen-III oxidase (308 aa).

Residue S100 coordinates substrate. A divalent metal cation is bound by residues H104 and H114. The active-site Proton donor is the H114. 116 to 118 (NFR) provides a ligand contact to substrate. A divalent metal cation-binding residues include H153 and H183. The tract at residues 248–283 (YVEFNLVFDRGTIFGLQSGGRTESILSSMPPIATWK) is important for dimerization. Substrate is bound at residue 266-268 (GGR).

The protein belongs to the aerobic coproporphyrinogen-III oxidase family. In terms of assembly, homodimer. Requires a divalent metal cation as cofactor.

It is found in the cytoplasm. It catalyses the reaction coproporphyrinogen III + O2 + 2 H(+) = protoporphyrinogen IX + 2 CO2 + 2 H2O. It participates in porphyrin-containing compound metabolism; protoporphyrin-IX biosynthesis; protoporphyrinogen-IX from coproporphyrinogen-III (O2 route): step 1/1. Involved in the heme biosynthesis. Catalyzes the aerobic oxidative decarboxylation of propionate groups of rings A and B of coproporphyrinogen-III to yield the vinyl groups in protoporphyrinogen-IX. The protein is Oxygen-dependent coproporphyrinogen-III oxidase of Francisella tularensis subsp. tularensis (strain FSC 198).